The primary structure comprises 335 residues: MTTILAIETSCDETAAAVIENGDTIRSNVVATQMESHARFGGVVPEIASRHHVEVVTAVVEEALEKAKVTYQDLTAVAVTEGPGLVGALLVGIHAAKAIAFAHGLPLIGVHHIAGHIYANQLVAKLQFPLLALVVSGGHTELIYMEKDGQFQVIGQTRDDAVGEAYDKVARALALPYPGGPNVEQLADTAEATLDLPRSWLEKDSYDFSFSGLKSAVLNRLNNDKQRGIVTDRAALAKGFQESVVDVLVAKTVRAQAQFNVKQVVLAGGVAANKGLRKALTEAFANKDVTLLVPPLSLCTDNAAMIGACAHSMWLRGIAGNMAMNARPGLPLSSF.

Residues H112 and H116 each contribute to the Fe cation site. Residues 134 to 138, D167, G180, and N273 each bind substrate; that span reads VVSGG. Residue D301 participates in Fe cation binding.

The protein belongs to the KAE1 / TsaD family. It depends on Fe(2+) as a cofactor.

Its subcellular location is the cytoplasm. The enzyme catalyses L-threonylcarbamoyladenylate + adenosine(37) in tRNA = N(6)-L-threonylcarbamoyladenosine(37) in tRNA + AMP + H(+). Functionally, required for the formation of a threonylcarbamoyl group on adenosine at position 37 (t(6)A37) in tRNAs that read codons beginning with adenine. Is involved in the transfer of the threonylcarbamoyl moiety of threonylcarbamoyl-AMP (TC-AMP) to the N6 group of A37, together with TsaE and TsaB. TsaD likely plays a direct catalytic role in this reaction. In Shouchella clausii (strain KSM-K16) (Alkalihalobacillus clausii), this protein is tRNA N6-adenosine threonylcarbamoyltransferase.